We begin with the raw amino-acid sequence, 223 residues long: Uracil-DNA glycosylase (223 aa).

Residue Asp67 is the Proton acceptor of the active site.

The protein belongs to the uracil-DNA glycosylase (UDG) superfamily. UNG family.

Its subcellular location is the cytoplasm. The enzyme catalyses Hydrolyzes single-stranded DNA or mismatched double-stranded DNA and polynucleotides, releasing free uracil.. Excises uracil residues from the DNA which can arise as a result of misincorporation of dUMP residues by DNA polymerase or due to deamination of cytosine. This is Uracil-DNA glycosylase from Borrelia duttonii (strain Ly).